We begin with the raw amino-acid sequence, 97 residues long: Putative mitochondrial import inner membrane translocase subunit Tim8 A-B (97 aa).

The Twin CX3C motif signature appears at 43-66 (CWEKCMDKPGPRLDGRAELCLVNC). Intrachain disulfides connect Cys-43-Cys-66 and Cys-47-Cys-62.

Belongs to the small Tim family. In terms of assembly, heterohexamer; possibly composed of 3 copies of TIMM8AB and 3 copies of TIMM13.

Its subcellular location is the mitochondrion inner membrane. Functionally, putative mitochondrial intermembrane chaperone that participates in the import and insertion of some multi-pass transmembrane proteins into the mitochondrial inner membrane. Also required for the transfer of beta-barrel precursors from the TOM complex to the sorting and assembly machinery (SAM complex) of the outer membrane. Acts as a chaperone-like protein that protects the hydrophobic precursors from aggregation and guide them through the mitochondrial intermembrane space. The chain is Putative mitochondrial import inner membrane translocase subunit Tim8 A-B (Timm8a2) from Mus musculus (Mouse).